The chain runs to 729 residues: Capsid protein VP1 (729 aa).

Positions 1–10 (MAPPAKRAKR) are enriched in basic residues. 3 disordered regions span residues 1 to 38 (MAPPAKRAKRGWVPPGYKYLGPGNSLDQGEPTNPSDAA), 96 to 115 (LATDSEPGTSGVSRAGKRTR), and 130 to 185 (KLTS…VGVS). The short motif at 4 to 13 (PAKRAKRGWV) is the Nuclear localization signal element. Residues 19 to 64 (YLGPGNSLDQGEPTNPSDAAAKEHDEAYDQYIKSGKNPYLYFSAAD) are phospholipase A2-like. The segment covering 25–35 (SLDQGEPTNPS) has biased composition (polar residues). Residues 132–142 (TSSAAQQSSQT) show a composition bias toward low complexity. The segment covering 143-152 (MSDGTSQPDS) has biased composition (polar residues). The span at 168–184 (GPGGSGGGGSGGGGVGV) shows a compositional bias: gly residues. Mg(2+) is bound at residue Asn325.

This sequence belongs to the parvoviridae capsid protein family.

The protein localises to the virion. Its subcellular location is the host nucleus. Its function is as follows. Capsid protein self-assembles to form an icosahedral capsid with a T=1 symmetry, about 22 nm in diameter, and consisting of 60 copies of two size variants of the capsid proteins, VP1 and VP2, which differ by the presence of an N-terminal extension in the minor protein VP1. The capsid encapsulates the genomic ssDNA. Capsid proteins are responsible for the attachment to host cell receptors. This attachment induces virion internalization predominantly through clathrin-dependent endocytosis. Binding to the host receptors also induces capsid rearrangements leading to surface exposure of VP1 N-terminus, specifically its phospholipase A2-like region and putative nuclear localization signal(s). VP1 N-terminus might serve as a lipolytic enzyme to breach the endosomal membrane during entry into host cell and might contribute to virus transport to the nucleus. The chain is Capsid protein VP1 from Mus musculus (Mouse).